Here is a 578-residue protein sequence, read N- to C-terminus: MLSCDICGETVTSEPDMKAHLIVHMENEIVCPFCKLSGVSYDEMCFHIETAHFEQNTLERNFERINTVQFGTSDNKKDNTLQCGMEVNSSILSGCASNHPKNSSQCLTKDSTLKHETFYSENLTESRKFLKSREKQSGLTEVKGSIYETTYGPPECPFCGKIEEHSEDMETHVKTTHANLLDISLEDCDQPLYDCPMCGLICTNYHILQEHVDLHLEENSFCQGMDRVQCSGDLQLAHQLQQEEDRKRRSEESRQEIEEFQKLQRQYGLDNSGGYKQQQLRNMEIEVNRGRMPPSEFHRRKADMMESLAIGIDDGKTKTSGIIEALHRYYQNAATDVRQVWLSSVVDHFHSSLGDKGWGCGYRNFQMLLSSLLQNDAYDDCLKGMSVPCIPKIQSMIEDAWKEGFDPQGASQLNNRLQGTKAWIGACEVYILLTSLRVKCHIVDFHKSTGPLGTHPRLFEWILNYYSSEGEGSPKVVCTSKPPIYLQHQGHSRTVIGIEEKKNRTLCLLIFDPGCPSREMQKLLKQDVEASSLKQLRKSMGNLKHKQYQIVAVEGALSPEEKVARRQDSQVFTAEKIP.

The C2H2-type 1 zinc finger occupies 2–24 (LSCDICGETVTSEPDMKAHLIVH). The C2H2-type 2; atypical zinc-finger motif lies at 29-52 (IVCPFCKLSGVSYDEMCFHIETAH). 2 C2H2-type zinc fingers span residues 154-177 (PECP…KTTH) and 193-215 (YDCP…VDLH). The tract at residues 226-248 (DRVQCSGDLQLAHQLQQEEDRKR) is MIU. The interval 249-274 (RSEESRQEIEEFQKLQRQYGLDNSGG) is zUBD/ZHA. K262 bears the N6-acetyllysine mark. C360 serves as the catalytic Nucleophile. H491 acts as the Proton acceptor in catalysis. Residue D512 is part of the active site.

The protein belongs to the peptidase C78 family. ZUFSP subfamily. In terms of assembly, interacts with RPA1 and RPA2.

It localises to the cytoplasm. It is found in the nucleus. It carries out the reaction Thiol-dependent hydrolysis of ester, thioester, amide, peptide and isopeptide bonds formed by the C-terminal Gly of ubiquitin (a 76-residue protein attached to proteins as an intracellular targeting signal).. Functionally, deubiquitinase with endodeubiquitinase activity that specifically interacts with and cleaves 'Lys-63'-linked long polyubiquitin chains. Shows only weak activity against 'Lys-11' and 'Lys-48'-linked chains. Plays an important role in genome stability pathways, functioning to prevent spontaneous DNA damage and also promote cellular survival in response to exogenous DNA damage. Modulates the ubiquitination status of replication protein A (RPA) complex proteins in response to replication stress. The protein is Zinc finger-containing ubiquitin peptidase 1 of Macaca fascicularis (Crab-eating macaque).